Reading from the N-terminus, the 435-residue chain is E3 ubiquitin-protein ligase itt1 (435 aa).

In terms of domain architecture, RWD spans 16-135 (DELIALQSIY…EHVRSIATIA (120 aa)). A TRIAD supradomain region spans residues 170–420 (RKFQCNVCFD…DPVSSCYGML (251 aa)). Residues cysteine 174, cysteine 177, cysteine 192, histidine 194, cysteine 197, cysteine 200, cysteine 219, cysteine 224, cysteine 266, cysteine 271, cysteine 286, cysteine 289, cysteine 294, cysteine 297, histidine 302, cysteine 308, cysteine 368, and cysteine 371 each coordinate Zn(2+). The RING-type 1 zinc finger occupies 174-224 (CNVCFDEFNGTDCFQLTRCGHVSCQSCLRDYYTMCIQEGMFSQIKCIDLDC). The IBR-type zinc finger occupies 245-308 (TNRYKELEEK…ATWHGDLSPC (64 aa)). Residues 368-396 (CPTCDRVVERIDGCCHMNCLCGTHFCFLC) form an RING-type 2; atypical zinc finger. The active site involves cysteine 381. Positions 386, 388, 393, 396, 408, and 416 each coordinate Zn(2+).

Belongs to the RBR family. RNF14 subfamily.

It is found in the cytoplasm. The protein resides in the nucleus. It catalyses the reaction [E2 ubiquitin-conjugating enzyme]-S-ubiquitinyl-L-cysteine + [acceptor protein]-L-lysine = [E2 ubiquitin-conjugating enzyme]-L-cysteine + [acceptor protein]-N(6)-ubiquitinyl-L-lysine.. The protein operates within protein modification; protein ubiquitination. In terms of biological role, E3 ubiquitin-protein ligase involved in the rescue of stalled ribosomes by promoting ubiquitination and degradation of proteins on stalled ribosomes. Specifically required to resolve RNA-protein cross-links caused by reactive aldehydes, which trigger translation stress by stalling ribosomes: acts by catalying 'Lys-6'-linked ubiquitination of RNA-protein cross-links, leading to their degradation. This Schizosaccharomyces pombe (strain 972 / ATCC 24843) (Fission yeast) protein is E3 ubiquitin-protein ligase itt1 (itt1).